The sequence spans 216 residues: GTPase IMAP family member GIMD1 (216 aa).

In terms of domain architecture, AIG1-type G spans 5-216; the sequence is KMTINLALFG…ENCYQVLTFK (212 aa). GTP-binding positions include 14–22, S35, and 147–149; these read GMTQSGKSS and HAE.

It belongs to the TRAFAC class TrmE-Era-EngA-EngB-Septin-like GTPase superfamily. AIG1/Toc34/Toc159-like paraseptin GTPase family. IAN subfamily.

The polypeptide is GTPase IMAP family member GIMD1 (GIMD1) (Bos taurus (Bovine)).